Here is a 181-residue protein sequence, read N- to C-terminus: ATP-dependent protease subunit HslV (181 aa).

Thr9 is an active-site residue. Na(+) is bound by residues Ala166, Cys169, and Thr172.

The protein belongs to the peptidase T1B family. HslV subfamily. In terms of assembly, a double ring-shaped homohexamer of HslV is capped on each side by a ring-shaped HslU homohexamer. The assembly of the HslU/HslV complex is dependent on binding of ATP.

The protein localises to the cytoplasm. The catalysed reaction is ATP-dependent cleavage of peptide bonds with broad specificity.. Its activity is regulated as follows. Allosterically activated by HslU binding. Its function is as follows. Protease subunit of a proteasome-like degradation complex believed to be a general protein degrading machinery. In Staphylococcus aureus (strain JH1), this protein is ATP-dependent protease subunit HslV.